The sequence spans 403 residues: MAKNINVQQSHWANPDKLEVELAERKGVGHPDYIADSASEEASRKLSLYYLKAFGTILHHNLDKTLVVGGQATPKYKGGDVVQPIYVIVSGRATTEVKTPSGVENIPIGTIIIESVKDWIKENFRYLDVEKHVVVDYKIGKGSTDLVGLFEANKQVPLSNDTSFGVGFAPYSTLENLVLSTERLLNSKEIRSKIPEIGEDIKVMGLRKGKEIELTVAMATISQLIDDLNHYLQVKEEAKQKILDLASKLAPEYSVKVNINTGDKIDKGIVYLTVTGTSAEHGDDGMTGRGNRATGLITPMRPMSLEATAGKNPVNHVGKLYNVLANLIAQKVHKDVKGINGVQVEILGQIGRPINDPLIANVQLAAENITTEIKREVEGITDELLSSVTKLSELILESKTMLF.

Residue 140-145 (GKGSTD) coordinates ATP.

It belongs to the AdoMet synthase 2 family. The cofactor is Mg(2+).

The catalysed reaction is L-methionine + ATP + H2O = S-adenosyl-L-methionine + phosphate + diphosphate. Its pathway is amino-acid biosynthesis; S-adenosyl-L-methionine biosynthesis; S-adenosyl-L-methionine from L-methionine: step 1/1. Its function is as follows. Catalyzes the formation of S-adenosylmethionine from methionine and ATP. The polypeptide is S-adenosylmethionine synthase (Sulfolobus acidocaldarius (strain ATCC 33909 / DSM 639 / JCM 8929 / NBRC 15157 / NCIMB 11770)).